The following is a 320-amino-acid chain: Cytochrome f (320 aa).

An N-terminal signal peptide occupies residues 1–35; it reads MQTRKTLSWIKEEITRSISVSLMIYIITGAYISNA. Heme is bound by residues Tyr-36, Cys-56, Cys-59, and His-60. Residues 286 to 306 form a helical membrane-spanning segment; sequence VQGLLFFLASVILAQIFLVLK.

The protein belongs to the cytochrome f family. The 4 large subunits of the cytochrome b6-f complex are cytochrome b6, subunit IV (17 kDa polypeptide, petD), cytochrome f and the Rieske protein, while the 4 small subunits are PetG, PetL, PetM and PetN. The complex functions as a dimer. The cofactor is heme.

The protein localises to the plastid. It localises to the chloroplast thylakoid membrane. In terms of biological role, component of the cytochrome b6-f complex, which mediates electron transfer between photosystem II (PSII) and photosystem I (PSI), cyclic electron flow around PSI, and state transitions. The chain is Cytochrome f from Populus trichocarpa (Western balsam poplar).